The primary structure comprises 135 residues: Histone H2A (135 aa).

It belongs to the histone H2A family. The nucleosome is a histone octamer containing two molecules each of H2A, H2B, H3 and H4 assembled in one H3-H4 heterotetramer and two H2A-H2B heterodimers. The octamer wraps approximately 147 bp of DNA.

It localises to the nucleus. The protein localises to the chromosome. Core component of nucleosome. Nucleosomes wrap and compact DNA into chromatin, limiting DNA accessibility to the cellular machineries which require DNA as a template. Histones thereby play a central role in transcription regulation, DNA repair, DNA replication and chromosomal stability. DNA accessibility is regulated via a complex set of post-translational modifications of histones, also called histone code, and nucleosome remodeling. This Trypanosoma cruzi protein is Histone H2A.